A 210-amino-acid chain; its full sequence is Synaptosomal-associated protein 23 (210 aa).

M1 is subject to N-acetylmethionine. Residues S5, S20, S23, and S34 each carry the phosphoserine modification. In terms of domain architecture, t-SNARE coiled-coil homology 1 spans 14–76 (HQVTDESLES…REAEKTLTEL (63 aa)). Residues 23–76 (STRRILGLAIESQDAGIKTITMLDEQGEQLNRIEEGMDQINKDMREAEKTLTEL) adopt a coiled-coil conformation. 5 S-palmitoyl cysteine lipidation sites follow: C79, C80, C83, C85, and C87. A disordered region spans residues 104 to 135 (GDGGDNSPSNVVSKQPSRITNGQPQQTTGAAS). The span at 109–133 (NSPSNVVSKQPSRITNGQPQQTTGA) shows a compositional bias: polar residues. Phosphoserine occurs at positions 110 and 160. Residues 145–207 (DAREDEMEEN…DIANTRAKKL (63 aa)) enclose the t-SNARE coiled-coil homology 2 domain.

This sequence belongs to the SNAP-25 family. In terms of assembly, homotetramer (via coiled-coil domain), also forms heterotetramers with STX4 and VAMP3. Found in a complex with VAMP8 and STX1A. Found in a complex with VAMP8 and STX4 in pancreas. Interacts simultaneously with SNAPIN and SYN4. Interacts with STX1A. Interacts with STX12. Interacts tightly to multiple syntaxins and synaptobrevins/VAMPs. Interacts with ZDHHC13 (via ANK repeats). Interacts with ZDHHC17 (via ANK repeats). In terms of processing, (Microbial infection) Targeted and hydrolyzed by C.botulinum neurotoxin type A (BoNT/A, botA) which hydrolyzes the 202-Thr-|-Arg-203 bond; the in vitro reaction is not highly efficient. (Microbial infection) Targeted and hydrolyzed by C.botulinum neurotoxin type E (BoNT/E) which hydrolyzes the 185-Arg-|-Ile-186 bond; the in vitro reaction is more efficient than that of BoNT/A. Expressed in non-neuronal tissues.

It is found in the cell membrane. It localises to the synapse. The protein resides in the synaptosome. Functionally, essential component of the high affinity receptor for the general membrane fusion machinery and an important regulator of transport vesicle docking and fusion. The polypeptide is Synaptosomal-associated protein 23 (Snap23) (Mus musculus (Mouse)).